Consider the following 962-residue polypeptide: Protein suppressor of underreplication (962 aa).

Disordered stretches follow at residues 353-413 (EIVT…TRAA), 438-590 (TPTP…LSGS), 658-712 (NSSH…SPDL), 866-900 (QERTQPSNGNRNSIVASLRKSPKSPKHGARTTQAT), and 916-962 (QTSS…ELFK). The segment covering 372 to 382 (PRTKSKKKCSK) has biased composition (basic residues). Basic and acidic residues predominate over residues 386–395 (PCKEADLTDS). Polar residues-rich tracts occupy residues 438-448 (TPTPSGATTAI) and 480-489 (LTRSAESKIN). The span at 524–552 (VKQESKAKAKPEQKKKIKTVDKPAQETPK) shows a compositional bias: basic and acidic residues. The segment covering 553–562 (RKPGRPRKCK) has biased composition (basic residues). Residues 564–576 (LTETLGKSKTKPN) show a composition bias toward polar residues. The segment covering 673–683 (RRTKALKRKRK) has biased composition (basic residues). Polar residues-rich tracts occupy residues 703–712 (RSATNKSPDL) and 866–880 (QERTQPSNGNRNSIV). Residues 885 to 894 (KSPKSPKHGA) show a composition bias toward basic residues. Residues 916-944 (QTSSVESVSAPSTPVNPSTSAAACQTRTA) show a composition bias toward polar residues. The span at 953–962 (TKRKRLELFK) shows a compositional bias: basic residues.

It is found in the nucleus. Its subcellular location is the chromosome. Required for underreplication of DNA, which is found in many late replicating euchromatic regions of salivary gland polytene chromosomes. Controls chromatin organization in polytene chromosomes. The polypeptide is Protein suppressor of underreplication (SuUR) (Drosophila erecta (Fruit fly)).